The sequence spans 695 residues: Ubiquitin carboxyl-terminal hydrolase 20 (695 aa).

2 disordered regions span residues 1-20 and 42-162; these read MLMAKPDVPSSILPRSSSIL and SLAL…SLFY. 2 stretches are compositionally biased toward low complexity: residues 9–20 and 61–86; these read PSSILPRSSSIL and NHDSVSIPPPIYDGYSSSSSDESQSV. Residues 112 to 124 show a composition bias toward acidic residues; it reads DDIDDDIWGDDDL. Residues 176–476 form the USP domain; sequence AGLWNLGNSC…DSYILFYARE (301 aa). C185 functions as the Nucleophile in the catalytic mechanism. H435 (proton acceptor) is an active-site residue. Residues 556–571 show a composition bias toward low complexity; sequence SAESSSGEESPMGELL. 2 disordered regions span residues 556-585 and 674-695; these read SAESSSGEESPMGELLDPLDPDDSYSPCTE and ARELLDQAISTNGSPPKKLKTT.

Belongs to the peptidase C19 family.

It catalyses the reaction Thiol-dependent hydrolysis of ester, thioester, amide, peptide and isopeptide bonds formed by the C-terminal Gly of ubiquitin (a 76-residue protein attached to proteins as an intracellular targeting signal).. Its function is as follows. Recognizes and hydrolyzes the peptide bond at the C-terminal Gly of ubiquitin. Involved in the processing of poly-ubiquitin precursors as well as that of ubiquitinated proteins. This is Ubiquitin carboxyl-terminal hydrolase 20 (UBP20) from Arabidopsis thaliana (Mouse-ear cress).